A 300-amino-acid polypeptide reads, in one-letter code: ClpXP adapter protein SpxH (300 aa).

Belongs to the SpxH family. As to quaternary structure, interacts with Spx.

It is found in the cytoplasm. Its function is as follows. Adapter protein required for efficient degradation of Spx by ClpXP under non-stress conditions. Interaction with Spx stabilizes Spx and exposes the C-terminus of Spx for recognition and proteolysis by ClpXP. The sequence is that of ClpXP adapter protein SpxH from Shouchella clausii (strain KSM-K16) (Alkalihalobacillus clausii).